The sequence spans 99 residues: Late cornified envelope protein 4A (99 aa).

Residues 78-99 (CYGSGSGQQSGGSGCCSGGGCC) are disordered. Over residues 81 to 99 (SGSGQQSGGSGCCSGGGCC) the composition is skewed to gly residues.

The protein belongs to the LCE family. In terms of assembly, interacts with CYSRT1; the interaction is direct. Skin-specific. Expression was readily detected in adult trunk skin, adult arm skin, fetal skin, penal skin, vulva, esophagus and tongue. Not expressed in the cervix, rectum, lung, colon, or placenta.

Its function is as follows. Precursors of the cornified envelope of the stratum corneum. The sequence is that of Late cornified envelope protein 4A (LCE4A) from Homo sapiens (Human).